We begin with the raw amino-acid sequence, 66 residues long: Small vasohibin-binding protein (66 aa).

Over residues M1–K23 the composition is skewed to basic and acidic residues. The tract at residues M1–E30 is disordered. Positions A5–Q52 form a coiled coil.

This sequence belongs to the SVBP family. In terms of assembly, interacts with VASH1 and VASH2. As to expression, highly expressed in bone marrow, spleen and testis.

It is found in the cytoplasm. Its subcellular location is the secreted. The protein localises to the cytoskeleton. Its function is as follows. Enhances the tyrosine carboxypeptidase activity of VASH1 and VASH2, thereby promoting the removal of the C-terminal tyrosine residue of alpha-tubulin. Also required to enhance the solubility and secretion of VASH1 and VASH2. Plays a role in axon and excitatory synapse formation. This is Small vasohibin-binding protein from Mus musculus (Mouse).